A 297-amino-acid chain; its full sequence is tRNA dimethylallyltransferase (297 aa).

10 to 17 (GITASGKS) is a binding site for ATP. Position 12–17 (12–17 (TASGKS)) interacts with substrate. The interaction with substrate tRNA stretch occupies residues 36 to 39 (DSKQ).

The protein belongs to the IPP transferase family. Monomer. The cofactor is Mg(2+).

The enzyme catalyses adenosine(37) in tRNA + dimethylallyl diphosphate = N(6)-dimethylallyladenosine(37) in tRNA + diphosphate. In terms of biological role, catalyzes the transfer of a dimethylallyl group onto the adenine at position 37 in tRNAs that read codons beginning with uridine, leading to the formation of N6-(dimethylallyl)adenosine (i(6)A). This is tRNA dimethylallyltransferase from Wolbachia sp. subsp. Brugia malayi (strain TRS).